Here is a 146-residue protein sequence, read N- to C-terminus: SMR1 protein (146 aa).

The signal sequence occupies residues 1-22 (MKSLYLIFGLWILLACFQSGEG). Disordered stretches follow at residues 23–43 (VRGP…TLPH) and 99–146 (TAPD…GGGK). Residues 109-139 (PPTQLHSTEQANTKTDAKISNTTATTQNSTD) show a composition bias toward polar residues. Asn129 and Asn136 each carry an N-linked (GlcNAc...) asparagine glycan.

In terms of processing, several O-linked glycosylation sites might be present in the C-terminal part. In terms of tissue distribution, expressed predominantly in the acinar cells of the submandibular gland and to lesser extent in the prostate.

The protein localises to the secreted. Its function is as follows. Sialorphin may be involved in the modulation of mineral balance between at least four systems: kidney, bone, tooth and circulation. In terms of biological role, submandibular gland peptide T is able to directly or indirectly down-regulate cardiovascular depression induced by septic shock (endotoxin stimuli), or anaphylactic challenge (nematode antigen sensitization). Functionally, sialorphin is an endogenous inhibitor of neprilysin. Inhibits the breakdown of Met-enkephalin and substance P in isolated tissue from the dorsal zone of the rat spinal cord. Has an analgesic effect when administered to rats by intravenous injection. The protein is SMR1 protein (Vcsa1) of Rattus norvegicus (Rat).